The following is a 91-amino-acid chain: Probable Fe(2+)-trafficking protein (91 aa).

The protein belongs to the Fe(2+)-trafficking protein family.

Could be a mediator in iron transactions between iron acquisition and iron-requiring processes, such as synthesis and/or repair of Fe-S clusters in biosynthetic enzymes. The protein is Probable Fe(2+)-trafficking protein of Shewanella denitrificans (strain OS217 / ATCC BAA-1090 / DSM 15013).